Consider the following 166-residue polypeptide: Peptide methionine sulfoxide reductase MsrA (166 aa).

Residue C11 is part of the active site.

Belongs to the MsrA Met sulfoxide reductase family.

The enzyme catalyses L-methionyl-[protein] + [thioredoxin]-disulfide + H2O = L-methionyl-(S)-S-oxide-[protein] + [thioredoxin]-dithiol. It carries out the reaction [thioredoxin]-disulfide + L-methionine + H2O = L-methionine (S)-S-oxide + [thioredoxin]-dithiol. Has an important function as a repair enzyme for proteins that have been inactivated by oxidation. Catalyzes the reversible oxidation-reduction of methionine sulfoxide in proteins to methionine. The protein is Peptide methionine sulfoxide reductase MsrA of Lachnoclostridium phytofermentans (strain ATCC 700394 / DSM 18823 / ISDg) (Clostridium phytofermentans).